A 464-amino-acid chain; its full sequence is Cysteine--tRNA ligase (464 aa).

Position 27 (Cys27) interacts with Zn(2+). Residues 29 to 39 (PTVYDDAHLGH) carry the 'HIGH' region motif. Positions 203, 234, and 238 each coordinate Zn(2+). A 'KMSKS' region motif is present at residues 266-270 (KMSKS). An ATP-binding site is contributed by Lys269.

Belongs to the class-I aminoacyl-tRNA synthetase family. Monomer. Zn(2+) serves as cofactor.

It is found in the cytoplasm. The catalysed reaction is tRNA(Cys) + L-cysteine + ATP = L-cysteinyl-tRNA(Cys) + AMP + diphosphate. The polypeptide is Cysteine--tRNA ligase (Campylobacter concisus (strain 13826)).